Reading from the N-terminus, the 320-residue chain is dTDP-glucose 4,6-dehydratase (320 aa).

NAD(+) contacts are provided by residues 11–12 (FI), 38–41 (DKLG), 64–65 (DI), 84–88 (FAAET), and Ser103. Thr88 contributes to the substrate binding site. Residue Thr128 participates in substrate binding. The active-site Proton donor is Asp129. Active-site proton acceptor residues include Glu130 and Tyr152. 152-156 (YAASK) is a binding site for NAD(+). Substrate is bound at residue Asn181. Position 182 (Asn182) interacts with NAD(+). Substrate contacts are provided by residues 191 to 192 (KM), 207 to 209 (PVY), Arg216, Asn251, and 274 to 278 (DRKGH).

The protein belongs to the NAD(P)-dependent epimerase/dehydratase family. dTDP-glucose dehydratase subfamily. As to quaternary structure, homodimer. NAD(+) serves as cofactor.

It carries out the reaction dTDP-alpha-D-glucose = dTDP-4-dehydro-6-deoxy-alpha-D-glucose + H2O. In terms of biological role, probably involved in the biosynthesis of the acarviose moiety of the alpha-glucosidase inhibitor acarbose. Catalyzes the dehydration of dTDP-D-glucose to form dTDP-6-deoxy-D-xylo-4-hexulose via a three-step process involving oxidation, dehydration and reduction. In Actinoplanes sp. (strain ATCC 31044 / CBS 674.73 / SE50/110), this protein is dTDP-glucose 4,6-dehydratase.